Here is a 369-residue protein sequence, read N- to C-terminus: tRNA-specific 2-thiouridylase MnmA (369 aa).

Residues 12–19 (GMSGGVDS) and methionine 38 contribute to the ATP site. The segment at 98–100 (NPD) is interaction with target base in tRNA. The active-site Nucleophile is the cysteine 103. Cysteine 103 and cysteine 200 are oxidised to a cystine. Glycine 128 is an ATP binding site. Residues 150–152 (KDQ) are interaction with tRNA. The active-site Cysteine persulfide intermediate is cysteine 200. The segment at 312–313 (RY) is interaction with tRNA.

It belongs to the MnmA/TRMU family. In terms of assembly, interacts with TusE.

It localises to the cytoplasm. The catalysed reaction is S-sulfanyl-L-cysteinyl-[protein] + uridine(34) in tRNA + AH2 + ATP = 2-thiouridine(34) in tRNA + L-cysteinyl-[protein] + A + AMP + diphosphate + H(+). Functionally, catalyzes the 2-thiolation of uridine at the wobble position (U34) of tRNA(Lys), tRNA(Glu) and tRNA(Gln), leading to the formation of s(2)U34, the first step of tRNA-mnm(5)s(2)U34 synthesis. Sulfur is provided by IscS, via a sulfur-relay system. Binds ATP and its substrate tRNAs. This is tRNA-specific 2-thiouridylase MnmA from Sodalis glossinidius (strain morsitans).